Reading from the N-terminus, the 443-residue chain is Transcriptional adapter 2-alpha (443 aa).

Proline 6 is subject to Phosphoserine; in variant Ser-6. The segment at 12-69 (SDKPPCRGCSSYLMEPYIKCAECGPPPFFLCLQCFTRGFEYKKHQSDHTYEIMTSDFP) adopts a ZZ-type zinc-finger fold. 8 residues coordinate Zn(2+): cysteine 17, cysteine 20, cysteine 31, cysteine 34, cysteine 42, cysteine 45, histidine 55, and histidine 59. Residues 70–122 (VLDPSWTAQEEMALLEAVMDCGFGNWQDVANQMCTKTKEECEKHYMKHFINNP) enclose the SANT domain. Glycyl lysine isopeptide (Lys-Gly) (interchain with G-Cter in SUMO2) cross-links involve residues lysine 132 and lysine 138. The disordered stretch occupies residues 348-372 (SPSIPMASNSGRRSAPPLNLTGLPG). The 88-residue stretch at 356–443 (NSGRRSAPPL…LIREGYITKG (88 aa)) folds into the SWIRM domain. The DNA-binding element occupies 426–435 (KTRKIYDFLI).

As to quaternary structure, interacts with GCN5 and NR3C1. Associated with the P/CAF protein in the PCAF complex. Component of the PCAF complex, at least composed of TADA2L/ADA2, TADA3L/ADA3, TAF5L/PAF65-beta, TAF6L/PAF65-alpha, TAF10/TAFII30, TAF12/TAFII20, TAF9/TAFII31 and TRRAP. Component of the ADA2A-containing complex (ATAC), composed of KAT14, KAT2A, TADA2L, TADA3L, ZZ3, MBIP, WDR5, YEATS2, CCDC101 and DR1. Interacts with CCDC134. In terms of tissue distribution, expressed in all tissues, but most abundantly in testis.

It is found in the nucleus. The protein resides in the chromosome. In terms of biological role, component of the ATAC complex, a complex with histone acetyltransferase activity on histones H3 and H4. Required for the function of some acidic activation domains, which activate transcription from a distant site. Binds double-stranded DNA. Binds dinucleosomes, probably at the linker region between neighboring nucleosomes. Plays a role in chromatin remodeling. May promote TP53/p53 'Lys-321' acetylation, leading to reduced TP53 stability and transcriptional activity. May also promote XRCC6 acetylation thus facilitating cell apoptosis in response to DNA damage. The polypeptide is Transcriptional adapter 2-alpha (TADA2A) (Homo sapiens (Human)).